A 223-amino-acid polypeptide reads, in one-letter code: MDNIPYFLATVLIFSLGFRIEEGMCQHYYLLRPIPSDSLPIVELKEDPDPVLDPKERDLNETELRAILGSHFEQNFMSINPPEDKHAGQDELNESELMKQRPNGIMPKEIKAMEFDIQHGKKHKPSKKLRRRLQLWLWSYTFCPVVHTWQDLGNRFWPRYLKVGSCYNKRSCSVPEGMVCKPPKSSHLTVLRWRCVQRKGGLKCAWIPVQYPVISECKCSCPN.

Residues 1–23 (MDNIPYFLATVLIFSLGFRIEEG) form the signal peptide. 2 N-linked (GlcNAc...) asparagine glycosylation sites follow: N60 and N93.

It belongs to the noggin family. In terms of assembly, homodimer; disulfide-linked.

The protein resides in the secreted. In terms of biological role, may function as an inhibitor of bone morphogenetic proteins (BMP) signaling during later stages of development including late phases of dorsoventral patterning, to refine the early pattern set up by the interaction of chordino and BMP2/4. Not involved in organizer function or early phases of dorsoventral pattern formation. In Danio rerio (Zebrafish), this protein is Noggin-3 (nog3).